Reading from the N-terminus, the 274-residue chain is Indole-3-glycerol phosphate synthase (274 aa).

This sequence belongs to the TrpC family.

It catalyses the reaction 1-(2-carboxyphenylamino)-1-deoxy-D-ribulose 5-phosphate + H(+) = (1S,2R)-1-C-(indol-3-yl)glycerol 3-phosphate + CO2 + H2O. It functions in the pathway amino-acid biosynthesis; L-tryptophan biosynthesis; L-tryptophan from chorismate: step 4/5. The chain is Indole-3-glycerol phosphate synthase from Kineococcus radiotolerans (strain ATCC BAA-149 / DSM 14245 / SRS30216).